The sequence spans 921 residues: cGMP-dependent 3',5'-cyclic phosphodiesterase (921 aa).

Position 1 is an N-acetylmethionine (M1). 2 disordered regions span residues 1 to 21 (MRRQPAASRDLFAQEPVPPGS) and 177 to 198 (ESSVAPEATQNPPEEAAGDQKG). Over residues 177 to 188 (ESSVAPEATQNP) the composition is skewed to polar residues. 2 consecutive GAF domains span residues 220 to 357 (DASS…STVL) and 389 to 528 (DVSV…GISI). Residues S411, D426, I445, Y468, and T479 each contribute to the 3',5'-cyclic GMP site. In terms of domain architecture, PDEase spans 558-882 (SDDEYTKLLH…EHWTKVSHKF (325 aa)). Residue H636 is the Proton donor of the active site. Zn(2+) is bound by residues H640, H676, D677, and D788. Position 677 (D677) interacts with Mg(2+).

This sequence belongs to the cyclic nucleotide phosphodiesterase family. PDE2 subfamily. As to quaternary structure, homodimer. Zn(2+) serves as cofactor. It depends on Mg(2+) as a cofactor.

The protein localises to the cell membrane. The protein resides in the cytoplasm. It is found in the mitochondrion. It localises to the mitochondrion inner membrane. Its subcellular location is the mitochondrion outer membrane. It catalyses the reaction a nucleoside 3',5'-cyclic phosphate + H2O = a nucleoside 5'-phosphate + H(+). The catalysed reaction is 3',5'-cyclic GMP + H2O = GMP + H(+). The enzyme catalyses 3',5'-cyclic AMP + H2O = AMP + H(+). Its activity is regulated as follows. The 3',5'-cyclic-AMP phosphodiesterase activity is stimulated by 3',5'-cyclic GMP. CGMP-activated cyclic nucleotide phosphodiesterase with a dual-specificity for the second messengers cAMP and cGMP, which are key regulators of many important physiological processes. Has a higher efficiency with cGMP compared to cAMP. Plays a role in cell growth and migration. Functionally, regulates mitochondrial cAMP levels and respiration. Involved in the regulation of mitochondria morphology/dynamics and apoptotic cell death via local modulation of cAMP/PKA signaling in the mitochondrion, including the monitoring of local cAMP levels at the outer mitochondrial membrane and of PKA-dependent phosphorylation of DNM1L. This chain is cGMP-dependent 3',5'-cyclic phosphodiesterase, found in Bos taurus (Bovine).